The following is a 665-amino-acid chain: Fructose-1,6-bisphosphatase class 3 (665 aa).

It belongs to the FBPase class 3 family. Requires Mn(2+) as cofactor.

The catalysed reaction is beta-D-fructose 1,6-bisphosphate + H2O = beta-D-fructose 6-phosphate + phosphate. It participates in carbohydrate biosynthesis; gluconeogenesis. This is Fructose-1,6-bisphosphatase class 3 from Alkaliphilus metalliredigens (strain QYMF).